The primary structure comprises 413 residues: Tyrosine--tRNA ligase (413 aa).

The 'HIGH' region motif lies at P59–H68. The short motif at K243–S247 is the 'KMSKS' region element. K246 is a binding site for ATP. The S4 RNA-binding domain maps to L351 to L411.

Belongs to the class-I aminoacyl-tRNA synthetase family. TyrS type 2 subfamily. Homodimer.

It localises to the cytoplasm. The catalysed reaction is tRNA(Tyr) + L-tyrosine + ATP = L-tyrosyl-tRNA(Tyr) + AMP + diphosphate + H(+). Functionally, catalyzes the attachment of tyrosine to tRNA(Tyr) in a two-step reaction: tyrosine is first activated by ATP to form Tyr-AMP and then transferred to the acceptor end of tRNA(Tyr). This is Tyrosine--tRNA ligase from Burkholderia pseudomallei (strain K96243).